An 811-amino-acid chain; its full sequence is Metal transporter cnnm-1 (811 aa).

Residues 1-24 form the signal peptide; it reads MSASCLRLLTLSLFILGQCNVTAA. N-linked (GlcNAc...) asparagine glycans are attached at residues asparagine 20, asparagine 49, asparagine 61, and asparagine 122. Residues 25-204 lie on the Extracellular side of the membrane; it reads QNGVDDEVTT…KEYFLPLPLQ (180 aa). A CNNM transmembrane domain is found at 197-376; that stretch reads YFLPLPLQIA…TDNGQVSNEL (180 aa). A helical transmembrane segment spans residues 205-225; it reads IACIGFLLCLSALFSGLTLGL. Over 226 to 259 the chain is Cytoplasmic; the sequence is MSLTPQELELVIKSGAIKEQKCAAKILPVRKKGN. The helical transmembrane segment at 260 to 280 threads the bilayer; the sequence is LLLCSLLLGNVIVNSAISILM. At 281–284 the chain is on the extracellular side; it reads GELT. A helical membrane pass occupies residues 285–305; the sequence is TGIYALIGSTMGIVIFGEILP. Topologically, residues 306–315 are cytoplasmic; that stretch reads QSICVKKGLE. The chain crosses the membrane as a helical span at residues 316-336; it reads VGAHTISITQLFIFLTFPIAW. Topologically, residues 337-811 are extracellular; that stretch reads PVSKLLDCLL…EEEMALLDQP (475 aa). 2 CBS domains span residues 394–456 and 462–530; these read MTKI…NFTV and YHKH…INDE. Asparagine 435 and asparagine 453 each carry an N-linked (GlcNAc...) asparagine glycan. Residues 741 to 760 are disordered; sequence DVSHNSSAHNSNLSLVEKPG. The span at 743–755 shows a compositional bias: low complexity; it reads SHNSSAHNSNLSL. N-linked (GlcNAc...) asparagine glycans are attached at residues asparagine 745 and asparagine 752.

It belongs to the ACDP family. In terms of tissue distribution, highly expressed in the intestine and in neurons, but it is also expressed in a variety of tissues including the pharynx, hypodermis, rectum and in muscles.

Its subcellular location is the basolateral cell membrane. Functionally, probable metal transporter. Probably acts redundantly with the other metal transport proteins cnnm-2, cnnm-3, cnnm-4 and cnnm-5 to regulate Mg(2+) homeostasis. Promotes postembryonic gonad development by regulating Mg(2+) levels, probably via AMPK signaling. The sequence is that of Metal transporter cnnm-1 from Caenorhabditis elegans.